The primary structure comprises 200 residues: Recombination protein RecR (200 aa).

The segment at 57–72 (CRQCRTLTEQELCPQC) adopts a C4-type zinc-finger fold. In terms of domain architecture, Toprim spans 80 to 175 (TQLCVVEGPT…AATRIAHGVP (96 aa)).

It belongs to the RecR family.

In terms of biological role, may play a role in DNA repair. It seems to be involved in an RecBC-independent recombinational process of DNA repair. It may act with RecF and RecO. This is Recombination protein RecR from Pseudomonas putida (strain GB-1).